Reading from the N-terminus, the 128-residue chain is Glycine cleavage system H protein (128 aa).

Residues 22 to 104 (TVLVGITDYA…YGEGWIFRLK (83 aa)) enclose the Lipoyl-binding domain. The residue at position 63 (Lys-63) is an N6-lipoyllysine.

Belongs to the GcvH family. As to quaternary structure, the glycine cleavage system is composed of four proteins: P, T, L and H. Monomer. Requires (R)-lipoate as cofactor.

Its function is as follows. The glycine cleavage system catalyzes the degradation of glycine. The H protein shuttles the methylamine group of glycine from the P protein to the T protein. This is Glycine cleavage system H protein from Thermus thermophilus (strain ATCC 27634 / DSM 579 / HB8).